Reading from the N-terminus, the 218-residue chain is ETS domain-containing protein ets-7 (218 aa).

The ETS DNA-binding region spans 12–93 (QRLLNFLRGL…KGKDSRYCFL (82 aa)). The span at 131–161 (TSNFSLQSSPSSSSNSSSARTMSATSSPTSS) shows a compositional bias: low complexity. A disordered region spans residues 131–162 (TSNFSLQSSPSSSSNSSSARTMSATSSPTSSL).

The protein belongs to the ETS family.

The protein resides in the nucleus. Functionally, probable transcription factor. Involved in responses to oxidative stress. This Caenorhabditis elegans protein is ETS domain-containing protein ets-7.